A 271-amino-acid polypeptide reads, in one-letter code: Enolase-phosphatase E1 (271 aa).

Mg(2+) contacts are provided by D16 and E18. Substrate-binding positions include 150-151 and K199; that span reads SS. D226 is a Mg(2+) binding site.

Belongs to the HAD-like hydrolase superfamily. MasA/MtnC family. In terms of assembly, monomer. The cofactor is Mg(2+).

It is found in the cytoplasm. The protein resides in the nucleus. It carries out the reaction 5-methylsulfanyl-2,3-dioxopentyl phosphate + H2O = 1,2-dihydroxy-5-(methylsulfanyl)pent-1-en-3-one + phosphate. It participates in amino-acid biosynthesis; L-methionine biosynthesis via salvage pathway; L-methionine from S-methyl-5-thio-alpha-D-ribose 1-phosphate: step 3/6. It functions in the pathway amino-acid biosynthesis; L-methionine biosynthesis via salvage pathway; L-methionine from S-methyl-5-thio-alpha-D-ribose 1-phosphate: step 4/6. In terms of biological role, bifunctional enzyme that catalyzes the enolization of 2,3-diketo-5-methylthiopentyl-1-phosphate (DK-MTP-1-P) into the intermediate 2-hydroxy-3-keto-5-methylthiopentenyl-1-phosphate (HK-MTPenyl-1-P), which is then dephosphorylated to form the acireductone 1,2-dihydroxy-3-keto-5-methylthiopentene (DHK-MTPene). This Candida dubliniensis (strain CD36 / ATCC MYA-646 / CBS 7987 / NCPF 3949 / NRRL Y-17841) (Yeast) protein is Enolase-phosphatase E1.